We begin with the raw amino-acid sequence, 378 residues long: MAKKLKKNEEITKKFGDERRKALDDALKNIEKDFGKGAVMRLGERAEQKVQVMSSGSLALDIALGAGGYPKGRIIEIYGPESSGKTTVALHAVAQAQKEGGIAAFIDAEHALDPAYAAALGVNIDELLLSQPDSGEQGLEIAGKLIDSGAVDLVVVDSVAALVPRAEIDGDIGDSHVGLQARMMSQAMRKLSASINKTKTIAIFINQLREKVGVMFGNPETTPGGRALKFYASVRLDVRGTTQIKGTGDQKDSSIGKETKIKVVKNKVAPPFKVAEVEIMYGEGISRTGELVKIASDLDIIQKAGAWFSYNGEKIGQGSENAKRYLAEHPELFDEIDRKVRVKFGLLEESEEESAMAVASEETDDLALDLDNGIEIED.

An ATP-binding site is contributed by 79–86; the sequence is GPESSGKT.

The protein belongs to the RecA family.

Its subcellular location is the cytoplasm. Functionally, can catalyze the hydrolysis of ATP in the presence of single-stranded DNA, the ATP-dependent uptake of single-stranded DNA by duplex DNA, and the ATP-dependent hybridization of homologous single-stranded DNAs. It interacts with LexA causing its activation and leading to its autocatalytic cleavage. The polypeptide is Protein RecA (Streptococcus pyogenes serotype M12 (strain MGAS2096)).